Consider the following 162-residue polypeptide: Ribosome-binding factor A (162 aa).

Residues 124 to 162 are disordered; the sequence is ARVRSGAKPAGEADPYRESGSGVEPGRDGSIGDDDQPEY.

This sequence belongs to the RbfA family. As to quaternary structure, monomer. Binds 30S ribosomal subunits, but not 50S ribosomal subunits or 70S ribosomes.

It localises to the cytoplasm. Functionally, one of several proteins that assist in the late maturation steps of the functional core of the 30S ribosomal subunit. Associates with free 30S ribosomal subunits (but not with 30S subunits that are part of 70S ribosomes or polysomes). Required for efficient processing of 16S rRNA. May interact with the 5'-terminal helix region of 16S rRNA. This is Ribosome-binding factor A from Mycolicibacterium paratuberculosis (strain ATCC BAA-968 / K-10) (Mycobacterium paratuberculosis).